Consider the following 232-residue polypeptide: U2 small nuclear ribonucleoprotein B'' (232 aa).

An RRM 1 domain is found at 10–89 (QTVYLRNLNE…KRMRVQYAKT (80 aa)). The tract at residues 90–159 (RSDCLATEDG…QEPPAPPNNI (70 aa)) is disordered. Over residues 108-123 (KKQEEKAAEKKRRAEE) the composition is skewed to basic and acidic residues. The segment covering 127 to 151 (SGPNAAAQSNGTGYQASRLGKTSQE) has biased composition (polar residues). An RRM 2 domain is found at 158-232 (NILFIQNLPA…NPMAISYAKK (75 aa)).

This sequence belongs to the RRM U1 A/B'' family. As to quaternary structure, component of the spliceosome where it is associated with snRNP U2.

It localises to the nucleus. The protein localises to the cajal body. The protein resides in the nucleoplasm. It is found in the cytoplasm. In terms of biological role, involved in nuclear pre-mRNA splicing. The protein is U2 small nuclear ribonucleoprotein B'' of Oryza sativa subsp. japonica (Rice).